Reading from the N-terminus, the 301-residue chain is Glycine--tRNA ligase alpha subunit (301 aa).

This sequence belongs to the class-II aminoacyl-tRNA synthetase family. Tetramer of two alpha and two beta subunits.

The protein localises to the cytoplasm. It carries out the reaction tRNA(Gly) + glycine + ATP = glycyl-tRNA(Gly) + AMP + diphosphate. This chain is Glycine--tRNA ligase alpha subunit, found in Polaromonas sp. (strain JS666 / ATCC BAA-500).